A 490-amino-acid chain; its full sequence is MKTILVITDGIGYSDKTQYNAFYHAKKPTYDYLFKNVPYGMIDTFGLSVGLPQGQMGNSEVGHMCIGSGRVLYQDLVRISRAIEYDEIKDNPALVEVTQQSAVVHLCGLLSDGGVHSHIVHLKALAQILSTQGKRVYLHLITDGRDVLPKSALNYLADIESICEDNVSIASVSGRFYAMDRDKRWDRVQKAYESIALGKNPTNLSPKEYIQSQYDEGIFDEFLTPVSFGGFQGMNDDESFVFVNFRSDRAREIVDCLGNPQFKEFKRERYVKLHIATMTEYDATFPYPILFPKQNVQNTLAEVISSHRLKQFHTAETEKYAHVTFFLNGGREEAFIGEERVLIPSPNVKTYDLQPQMNASAVGDAVIKAVEQGYDFVVVNFANGDMVGHTGNLEAAIKAVEAVDKELGRIVESAQKHHYALFITSDHGNCEEMKDEKGNMLTNHTVGQVWCFGMIEGVSKIENGGLNNIAPSVLKAMNLPIPPEMDKPLF.

Residues aspartate 9 and serine 59 each contribute to the Mn(2+) site. Serine 59 serves as the catalytic Phosphoserine intermediate. Residues histidine 116, 145 to 146 (RD), arginine 175, arginine 181, 246 to 249 (RSDR), and lysine 319 each bind substrate. Residues aspartate 385, histidine 389, aspartate 426, histidine 427, and histidine 444 each contribute to the Mn(2+) site.

This sequence belongs to the BPG-independent phosphoglycerate mutase family. As to quaternary structure, monomer. Mn(2+) serves as cofactor.

The catalysed reaction is (2R)-2-phosphoglycerate = (2R)-3-phosphoglycerate. It participates in carbohydrate degradation; glycolysis; pyruvate from D-glyceraldehyde 3-phosphate: step 3/5. Catalyzes the interconversion of 2-phosphoglycerate and 3-phosphoglycerate. This chain is 2,3-bisphosphoglycerate-independent phosphoglycerate mutase, found in Helicobacter hepaticus (strain ATCC 51449 / 3B1).